The following is a 96-amino-acid chain: Exodeoxyribonuclease 7 small subunit (96 aa).

The tract at residues 73–96 is disordered; that stretch reads RAPEQSAANDVSAPGSAEEHDHGR.

It belongs to the XseB family. Heterooligomer composed of large and small subunits.

The protein resides in the cytoplasm. It carries out the reaction Exonucleolytic cleavage in either 5'- to 3'- or 3'- to 5'-direction to yield nucleoside 5'-phosphates.. Functionally, bidirectionally degrades single-stranded DNA into large acid-insoluble oligonucleotides, which are then degraded further into small acid-soluble oligonucleotides. In Acidothermus cellulolyticus (strain ATCC 43068 / DSM 8971 / 11B), this protein is Exodeoxyribonuclease 7 small subunit.